Consider the following 185-residue polypeptide: MNNETIKKAQDNMDKSIKVYQKRLASIRAGVANAALLDNVQVEYYGAPTPLTQMSSITIPEPRVLLITPYDQNSLDDIEHALLASNLGLTPANDGKVIRLVIPQLTGERREEIAKEVGKYAEDAKIAVRNVRREAMDALKKEQKDGNITEDEQRNLEKQVQKITDDSTKKIDQLADEKRKEITQG.

A disordered region spans residues 140–168 (KKEQKDGNITEDEQRNLEKQVQKITDDST).

It belongs to the RRF family.

It localises to the cytoplasm. Its function is as follows. Responsible for the release of ribosomes from messenger RNA at the termination of protein biosynthesis. May increase the efficiency of translation by recycling ribosomes from one round of translation to another. The sequence is that of Ribosome-recycling factor from Lactobacillus helveticus (strain DPC 4571).